The sequence spans 459 residues: Bifunctional protein GlmU (459 aa).

The segment at 1–229 (MSNFAIILAA…FDESLGVNDR (229 aa)) is pyrophosphorylase. UDP-N-acetyl-alpha-D-glucosamine-binding positions include 8-11 (LAAG), K22, Q72, and 77-78 (GT). Mg(2+) is bound at residue D102. Residues G139, E154, N169, and N227 each contribute to the UDP-N-acetyl-alpha-D-glucosamine site. N227 is a Mg(2+) binding site. The segment at 230–250 (VALATAESVMRRRINHKHMVN) is linker. Positions 251–459 (GVSFVNPEAT…TRLPHHPKNQ (209 aa)) are N-acetyltransferase. UDP-N-acetyl-alpha-D-glucosamine contacts are provided by R332 and K350. H362 acts as the Proton acceptor in catalysis. Residues Y365 and N376 each contribute to the UDP-N-acetyl-alpha-D-glucosamine site. Residues A379, 385-386 (NY), S404, A422, and R439 contribute to the acetyl-CoA site.

In the N-terminal section; belongs to the N-acetylglucosamine-1-phosphate uridyltransferase family. This sequence in the C-terminal section; belongs to the transferase hexapeptide repeat family. In terms of assembly, homotrimer. Mg(2+) serves as cofactor.

The protein resides in the cytoplasm. The enzyme catalyses alpha-D-glucosamine 1-phosphate + acetyl-CoA = N-acetyl-alpha-D-glucosamine 1-phosphate + CoA + H(+). It carries out the reaction N-acetyl-alpha-D-glucosamine 1-phosphate + UTP + H(+) = UDP-N-acetyl-alpha-D-glucosamine + diphosphate. The protein operates within nucleotide-sugar biosynthesis; UDP-N-acetyl-alpha-D-glucosamine biosynthesis; N-acetyl-alpha-D-glucosamine 1-phosphate from alpha-D-glucosamine 6-phosphate (route II): step 2/2. It participates in nucleotide-sugar biosynthesis; UDP-N-acetyl-alpha-D-glucosamine biosynthesis; UDP-N-acetyl-alpha-D-glucosamine from N-acetyl-alpha-D-glucosamine 1-phosphate: step 1/1. Its pathway is bacterial outer membrane biogenesis; LPS lipid A biosynthesis. Functionally, catalyzes the last two sequential reactions in the de novo biosynthetic pathway for UDP-N-acetylglucosamine (UDP-GlcNAc). The C-terminal domain catalyzes the transfer of acetyl group from acetyl coenzyme A to glucosamine-1-phosphate (GlcN-1-P) to produce N-acetylglucosamine-1-phosphate (GlcNAc-1-P), which is converted into UDP-GlcNAc by the transfer of uridine 5-monophosphate (from uridine 5-triphosphate), a reaction catalyzed by the N-terminal domain. This is Bifunctional protein GlmU from Streptococcus pneumoniae (strain 70585).